The following is a 134-amino-acid chain: Holo-[acyl-carrier-protein] synthase (134 aa).

Positions 8 and 57 each coordinate Mg(2+).

It belongs to the P-Pant transferase superfamily. AcpS family. Requires Mg(2+) as cofactor.

It is found in the cytoplasm. The enzyme catalyses apo-[ACP] + CoA = holo-[ACP] + adenosine 3',5'-bisphosphate + H(+). Its function is as follows. Transfers the 4'-phosphopantetheine moiety from coenzyme A to a Ser of acyl-carrier-protein. The protein is Holo-[acyl-carrier-protein] synthase of Rhizobium johnstonii (strain DSM 114642 / LMG 32736 / 3841) (Rhizobium leguminosarum bv. viciae).